Consider the following 203-residue polypeptide: Large ribosomal subunit protein bL25 (203 aa).

This sequence belongs to the bacterial ribosomal protein bL25 family. CTC subfamily. As to quaternary structure, part of the 50S ribosomal subunit; part of the 5S rRNA/L5/L18/L25 subcomplex. Contacts the 5S rRNA. Binds to the 5S rRNA independently of L5 and L18.

In terms of biological role, this is one of the proteins that binds to the 5S RNA in the ribosome where it forms part of the central protuberance. In Cereibacter sphaeroides (strain ATCC 17029 / ATH 2.4.9) (Rhodobacter sphaeroides), this protein is Large ribosomal subunit protein bL25.